The chain runs to 438 residues: MQTIYTKITDIKGNLITVEAEGARLGELAEIERVDGRSSYASVLRFDAKKVTLQVFGGTSGLSTGDRVVFLGRSMEVTYGESLIGRRLNGVGKPIDGEGECFGDPIEISTPTFNPVCRVVPRDMVRTNIPMIDVFNCLVKSQKIPIFSSSGEKHNALLMRIAAQTDADIVIIGGMGLTFVDYSFFVEESKRLGFADKSVMFIHKAVDAPVECVLIPDMALACAEKFAVDQNKNVLVLLTDMTAFADALKEIAITMDQIPANRGYPGSLYSDLALRYEKAVDIAQGGSITLISVTTMPGDDITHPVPDNTGFITEGQFDLKNNCIDPFGSLSRLKQLVIGKVTREDHGDLANALIRLYADSRKANERMSMGFKLSNWDKKLLAFAELFETRLMSLEVNIPLEEALDIGWKILAQSFHSEEVGIKEQLINKYWPKSCLHR.

Belongs to the ATPase alpha/beta chains family.

Functionally, produces ATP from ADP in the presence of a proton gradient across the membrane. The V-type beta chain is a regulatory subunit. This is V-type ATP synthase beta chain from Chlamydia abortus (strain DSM 27085 / S26/3) (Chlamydophila abortus).